The sequence spans 79 residues: DNA-directed RNA polymerase subunit omega (79 aa).

The protein belongs to the RNA polymerase subunit omega family. As to quaternary structure, in cyanobacteria the RNAP catalytic core is composed of 2 alpha, 1 beta, 1 beta', 1 gamma and 1 omega subunit. When a sigma factor is associated with the core the holoenzyme is formed, which can initiate transcription.

The catalysed reaction is RNA(n) + a ribonucleoside 5'-triphosphate = RNA(n+1) + diphosphate. In terms of biological role, promotes RNA polymerase assembly. Latches the N- and C-terminal regions of the beta' subunit thereby facilitating its interaction with the beta and alpha subunits. The protein is DNA-directed RNA polymerase subunit omega of Synechococcus sp. (strain JA-3-3Ab) (Cyanobacteria bacterium Yellowstone A-Prime).